A 435-amino-acid chain; its full sequence is Actin-like protein 7A (435 aa).

A disordered region spans residues 1-64 (MWAPPAAIMG…TESKAAKERP (64 aa)). Residues 20-31 (QAPLQTQALQTA) are compositionally biased toward low complexity. The segment at 31–51 (ASLRDGPAKRAVWVRHTSSEP) is required for interaction with TES. Positions 55–64 (TESKAAKERP) are enriched in basic and acidic residues.

It belongs to the actin family. In terms of assembly, interacts (via N-terminus) with TES (via LIM domain 2). Heterodimer with TES; the heterodimer interacts with ENAH to form a heterotrimer. Interacts with ACTL9. Interacts with CYLC1; the interaction may be relevant for proper acrosome attachment to the nuclear envelope. As to expression, strongly expressed in testis. Also expressed in other tissues.

The protein localises to the cytoplasm. It is found in the cytoskeleton. It localises to the golgi apparatus. Its subcellular location is the nucleus. The protein resides in the cytoplasmic vesicle. The protein localises to the secretory vesicle. It is found in the acrosome. In terms of biological role, essential for normal spermatogenesis and male fertility. Required for normal sperm head morphology, acroplaxome formation, acrosome attachment, and acrosome granule stability. May anchor and stabilize acrosomal adherence to the acroplaxome at least in part by facilitating the presence of F-actin in the subacrosomal space. May play an important role in formation and fusion of Golgi-derived vesicles during acrosome biogenesis. The chain is Actin-like protein 7A (ACTL7A) from Homo sapiens (Human).